We begin with the raw amino-acid sequence, 306 residues long: Glutamyl-Q tRNA(Asp) synthetase (306 aa).

L-glutamate is bound by residues R29 to S33 and D65. Positions P32–N42 match the 'HIGH' region motif. Zn(2+) is bound by residues C121, C123, Y141, and C145. L-glutamate-binding residues include Y188 and R206. The 'KMSKS' region signature appears at K244–R248. Residue K247 coordinates ATP.

The protein belongs to the class-I aminoacyl-tRNA synthetase family. GluQ subfamily. It depends on Zn(2+) as a cofactor.

Catalyzes the tRNA-independent activation of glutamate in presence of ATP and the subsequent transfer of glutamate onto a tRNA(Asp). Glutamate is transferred on the 2-amino-5-(4,5-dihydroxy-2-cyclopenten-1-yl) moiety of the queuosine in the wobble position of the QUC anticodon. This chain is Glutamyl-Q tRNA(Asp) synthetase, found in Prochlorococcus marinus (strain MIT 9313).